Here is a 364-residue protein sequence, read N- to C-terminus: tRNA 2-selenouridine synthase (364 aa).

Residues 14 to 137 (LLADTPLIDV…LRQTAIQATW (124 aa)) form the Rhodanese domain. C97 functions as the S-selanylcysteine intermediate in the catalytic mechanism.

This sequence belongs to the SelU family. In terms of assembly, monomer.

It carries out the reaction 5-methylaminomethyl-2-thiouridine(34) in tRNA + selenophosphate + (2E)-geranyl diphosphate + H2O + H(+) = 5-methylaminomethyl-2-selenouridine(34) in tRNA + (2E)-thiogeraniol + phosphate + diphosphate. It catalyses the reaction 5-methylaminomethyl-2-thiouridine(34) in tRNA + (2E)-geranyl diphosphate = 5-methylaminomethyl-S-(2E)-geranyl-thiouridine(34) in tRNA + diphosphate. The enzyme catalyses 5-methylaminomethyl-S-(2E)-geranyl-thiouridine(34) in tRNA + selenophosphate + H(+) = 5-methylaminomethyl-2-(Se-phospho)selenouridine(34) in tRNA + (2E)-thiogeraniol. The catalysed reaction is 5-methylaminomethyl-2-(Se-phospho)selenouridine(34) in tRNA + H2O = 5-methylaminomethyl-2-selenouridine(34) in tRNA + phosphate. Its function is as follows. Involved in the post-transcriptional modification of the uridine at the wobble position (U34) of tRNA(Lys), tRNA(Glu) and tRNA(Gln). Catalyzes the conversion of 2-thiouridine (S2U-RNA) to 2-selenouridine (Se2U-RNA). Acts in a two-step process involving geranylation of 2-thiouridine (S2U) to S-geranyl-2-thiouridine (geS2U) and subsequent selenation of the latter derivative to 2-selenouridine (Se2U) in the tRNA chain. The sequence is that of tRNA 2-selenouridine synthase from Salmonella typhi.